A 445-amino-acid chain; its full sequence is UNC93-like protein MFSD11 (445 aa).

The chain crosses the membrane as a helical span at residues 8–28 (LLNIIILGIGFMFMFTAFQTS). N-linked (GlcNAc...) asparagine glycosylation is present at N40. The next 4 helical transmembrane spans lie at 53–73 (AIIYSVFSASNLIAPSIVAVI), 74–94 (GCQMSMFLSGLLYSAYIAMFI), 98–118 (TWSFYTLSVLIGIAAAVLWTA), and 138–158 (IFWALLQFSMLFGNLFIYLAW). N-linked (GlcNAc...) asparagine glycosylation is present at N163. A run of 7 helical transmembrane segments spans residues 170 to 190 (RTVFIALTVISLVGSVLFFLI), 239 to 259 (MLLLSILVAYTGLELTFYSGV), 277 to 297 (LIGLSGIFVGLGEVLGGGLFG), 309 to 329 (PVVILGVVVHFLAFYMIYLYM), 345 to 365 (AFINPSKTIALACSFLLGLGD), 385 to 405 (APAFAVFKFVQSVSAAVAFFY), and 415 to 435 (LLILVIFGFFGTISFFFVEWG).

The protein belongs to the unc-93 family.

It localises to the membrane. The chain is UNC93-like protein MFSD11 (mfsd11) from Xenopus tropicalis (Western clawed frog).